A 463-amino-acid polypeptide reads, in one-letter code: Oxidoreductase OXR1 (463 aa).

6-hydroxy-FAD-binding positions include 59–63 (GGSYS), Val-154, and Asp-366.

Belongs to the FAD-dependent oxidoreductase family. The cofactor is 6-hydroxy-FAD.

Its pathway is siderophore biosynthesis. In terms of biological role, oxidoreductase; part of the gene cluster that mediates the biosynthesis of hydroxamate-containing siderophores that play a critical role in virulence via intracellular iron acquisition during macrophage infection. The polypeptide is Oxidoreductase OXR1 (Ajellomyces capsulatus (Darling's disease fungus)).